Reading from the N-terminus, the 95-residue chain is MAWARDEGGAAVLEILVQPRASRTRAVGEHDGRLKIQLAAPPVDGAANAALVEFLAVALGVRRADVALLRGEAGRRKTVRVAGITAAAAVAALAP.

Belongs to the UPF0235 family.

The protein is UPF0235 protein Adeh_1087 of Anaeromyxobacter dehalogenans (strain 2CP-C).